Consider the following 373-residue polypeptide: Protein translocase subunit SecF (373 aa).

The next 6 membrane-spanning stretches (helical) occupy residues 26-46, 142-162, 166-186, 193-213, 251-271, and 280-300; these read IWYG…AVRG, WQGL…AFEW, LAAF…YALV, GTVI…VVVF, VVAL…LGAG, and LFVG…PLVA. Residues 322-332 are compositionally biased toward low complexity; that stretch reads QGAAKGESAES. The disordered stretch occupies residues 322–373; that stretch reads QGAAKGESAESAADEGAYDADEPDDAAPAVVGPRNQPASRGRGRGRPSGKRR. Residues 333–346 are compositionally biased toward acidic residues; the sequence is AADEGAYDADEPDD. A compositionally biased stretch (basic residues) spans 362 to 373; the sequence is GRGRGRPSGKRR.

It belongs to the SecD/SecF family. SecF subfamily. Forms a complex with SecD. Part of the essential Sec protein translocation apparatus which comprises SecA, SecYEG and auxiliary proteins SecDF. Other proteins may also be involved.

The protein resides in the cell membrane. Functionally, part of the Sec protein translocase complex. Interacts with the SecYEG preprotein conducting channel. SecDF uses the proton motive force (PMF) to complete protein translocation after the ATP-dependent function of SecA. The sequence is that of Protein translocase subunit SecF from Streptomyces coelicolor (strain ATCC BAA-471 / A3(2) / M145).